A 374-amino-acid polypeptide reads, in one-letter code: WD repeat-containing protein JIP5 (374 aa).

WD repeat units follow at residues 21-61, 68-107, 120-158, 161-200, 205-244, 249-287, and 290-330; these read AYTS…GETS, PSKR…IQLS, AHEC…SIRT, QHFD…STPL, DQED…ADSV, GHPA…FLGV, and THEE…EDSD. Positions 325–344 are enriched in acidic residues; that stretch reads LFEDSDEDDEMEEDEPDSDE. The disordered stretch occupies residues 325–374; sequence LFEDSDEDDEMEEDEPDSDEEKSKKKKKDNGMKDMSRGQAENDGSFFADL.

The protein belongs to the WD repeat WDR55 family.

The protein resides in the nucleus. It is found in the nucleolus. The polypeptide is WD repeat-containing protein JIP5 (JIP5) (Cryptococcus neoformans var. neoformans serotype D (strain B-3501A) (Filobasidiella neoformans)).